The following is a 334-amino-acid chain: Porphobilinogen deaminase (334 aa).

Cys258 is modified (S-(dipyrrolylmethanemethyl)cysteine).

This sequence belongs to the HMBS family. In terms of assembly, monomer. Requires dipyrromethane as cofactor.

The catalysed reaction is 4 porphobilinogen + H2O = hydroxymethylbilane + 4 NH4(+). It participates in porphyrin-containing compound metabolism; protoporphyrin-IX biosynthesis; coproporphyrinogen-III from 5-aminolevulinate: step 2/4. Its function is as follows. Tetrapolymerization of the monopyrrole PBG into the hydroxymethylbilane pre-uroporphyrinogen in several discrete steps. The sequence is that of Porphobilinogen deaminase from Ralstonia nicotianae (strain ATCC BAA-1114 / GMI1000) (Ralstonia solanacearum).